The sequence spans 57 residues: Large ribosomal subunit protein bL32c (57 aa).

This sequence belongs to the bacterial ribosomal protein bL32 family.

Its subcellular location is the plastid. It localises to the chloroplast. The chain is Large ribosomal subunit protein bL32c from Nandina domestica (Heavenly bamboo).